The primary structure comprises 105 residues: UPF0148 protein PH0795 (105 aa).

The protein belongs to the UPF0148 family.

The polypeptide is UPF0148 protein PH0795 (Pyrococcus horikoshii (strain ATCC 700860 / DSM 12428 / JCM 9974 / NBRC 100139 / OT-3)).